Here is a 121-residue protein sequence, read N- to C-terminus: NAD(P)H-quinone oxidoreductase subunit 3, chloroplastic (121 aa).

3 helical membrane-spanning segments follow: residues 10–30, 65–85, and 90–110; these read FWAF…VSNL, MFAL…PWAM, and LGII…IGLI.

The protein belongs to the complex I subunit 3 family. In terms of assembly, NDH is composed of at least 16 different subunits, 5 of which are encoded in the nucleus.

It is found in the plastid. It localises to the chloroplast thylakoid membrane. It catalyses the reaction a plastoquinone + NADH + (n+1) H(+)(in) = a plastoquinol + NAD(+) + n H(+)(out). It carries out the reaction a plastoquinone + NADPH + (n+1) H(+)(in) = a plastoquinol + NADP(+) + n H(+)(out). Functionally, NDH shuttles electrons from NAD(P)H:plastoquinone, via FMN and iron-sulfur (Fe-S) centers, to quinones in the photosynthetic chain and possibly in a chloroplast respiratory chain. The immediate electron acceptor for the enzyme in this species is believed to be plastoquinone. Couples the redox reaction to proton translocation, and thus conserves the redox energy in a proton gradient. This chain is NAD(P)H-quinone oxidoreductase subunit 3, chloroplastic, found in Staurastrum punctulatum (Green alga).